Here is a 456-residue protein sequence, read N- to C-terminus: Bifunctional protein GlmU (456 aa).

The interval 1–229 (MSNSSMSVVI…LSEVEGVNNR (229 aa)) is pyrophosphorylase. UDP-N-acetyl-alpha-D-glucosamine is bound by residues 11–14 (LAAG), K25, Q76, 81–82 (GT), 103–105 (YGD), G140, E154, N169, and N227. Position 105 (D105) interacts with Mg(2+). Residue N227 coordinates Mg(2+). The interval 230-250 (LQLSALERVFQTEQAEKLLLA) is linker. The tract at residues 251 to 456 (GVMLLDPSRF…QGWKRPVKKK (206 aa)) is N-acetyltransferase. UDP-N-acetyl-alpha-D-glucosamine-binding residues include R333 and K351. The Proton acceptor role is filled by H363. The UDP-N-acetyl-alpha-D-glucosamine site is built by Y366 and N377. Residues A380, 386 to 387 (NY), S405, A423, and R440 each bind acetyl-CoA.

The protein in the N-terminal section; belongs to the N-acetylglucosamine-1-phosphate uridyltransferase family. This sequence in the C-terminal section; belongs to the transferase hexapeptide repeat family. As to quaternary structure, homotrimer. It depends on Mg(2+) as a cofactor.

The protein localises to the cytoplasm. It carries out the reaction alpha-D-glucosamine 1-phosphate + acetyl-CoA = N-acetyl-alpha-D-glucosamine 1-phosphate + CoA + H(+). The enzyme catalyses N-acetyl-alpha-D-glucosamine 1-phosphate + UTP + H(+) = UDP-N-acetyl-alpha-D-glucosamine + diphosphate. Its pathway is nucleotide-sugar biosynthesis; UDP-N-acetyl-alpha-D-glucosamine biosynthesis; N-acetyl-alpha-D-glucosamine 1-phosphate from alpha-D-glucosamine 6-phosphate (route II): step 2/2. It participates in nucleotide-sugar biosynthesis; UDP-N-acetyl-alpha-D-glucosamine biosynthesis; UDP-N-acetyl-alpha-D-glucosamine from N-acetyl-alpha-D-glucosamine 1-phosphate: step 1/1. It functions in the pathway bacterial outer membrane biogenesis; LPS lipid A biosynthesis. Catalyzes the last two sequential reactions in the de novo biosynthetic pathway for UDP-N-acetylglucosamine (UDP-GlcNAc). The C-terminal domain catalyzes the transfer of acetyl group from acetyl coenzyme A to glucosamine-1-phosphate (GlcN-1-P) to produce N-acetylglucosamine-1-phosphate (GlcNAc-1-P), which is converted into UDP-GlcNAc by the transfer of uridine 5-monophosphate (from uridine 5-triphosphate), a reaction catalyzed by the N-terminal domain. The sequence is that of Bifunctional protein GlmU from Yersinia pseudotuberculosis serotype O:1b (strain IP 31758).